The following is a 2256-amino-acid chain: Death-inducer obliterator 1 (2256 aa).

At methionine 1 the chain carries N-acetylmethionine. A compositionally biased stretch (basic and acidic residues) spans 1–25 (MDDKGHLSNEEAPKAIKPTSKEFRK). The disordered stretch occupies residues 1-256 (MDDKGHLSNE…NPREAGKPKP (256 aa)). Polar residues-rich tracts occupy residues 48-59 (SEQQPQQHNLSL) and 96-119 (EPTS…SSEI). Phosphoserine occurs at positions 58 and 112. The segment covering 128 to 142 (LGKEHPASSEKAKGG) has biased composition (basic and acidic residues). The span at 143–153 (EEEEDTSDSDS) shows a compositional bias: acidic residues. Position 148 is a phosphothreonine (threonine 148). Serine 149 and serine 151 each carry phosphoserine. 2 short sequence motifs (nuclear localization signal) span residues 162–170 (QNRLRRKRE) and 182–190 (QNRLRKKRR). Over residues 169 to 178 (REQEPVERSL) the composition is skewed to basic and acidic residues. Basic and acidic residues-rich tracts occupy residues 206 to 216 (EQDRPLCKQEP) and 246 to 256 (ENPREAGKPKP). Residues 265-319 (ALYCICRQPHNNRFMICCDRCEEWFHGDCVGISEARGRLLERNGEDYICPNCTIL) form a PHD-type zinc finger. Disordered stretches follow at residues 481-535 (LASR…DDRR), 598-624 (RPWP…ASKK), 641-668 (ANVP…SQIR), 778-822 (SRTK…PEKS), 856-970 (QVPS…TALS), 1011-1039 (AKPS…PPEG), and 1197-1218 (PSSA…QEEL). Positions 495–506 (ESSTPSWASDHN) are enriched in polar residues. Position 522 is a phosphoserine (serine 522). A TFIIS central domain is found at 667–787 (IRQNIRRSLK…SRTKLLNESK (121 aa)). Over residues 778–788 (SRTKLLNESKK) the composition is skewed to basic and acidic residues. The span at 797–812 (PDMEDSPPVSDSEEQQ) shows a compositional bias: acidic residues. A phosphoserine mark is found at serine 802 and serine 806. Composition is skewed to basic and acidic residues over residues 875–886 (SKKEDFKPRHDS) and 921–935 (QERK…DSHP). Lysine 876 participates in a covalent cross-link: Glycyl lysine isopeptide (Lys-Gly) (interchain with G-Cter in SUMO2). Residue serine 886 is modified to Phosphoserine. Positions 937–962 (PSSLGGLSPSSASGGSGVVTTVTMSG) are enriched in low complexity. A phosphoserine mark is found at serine 1016, serine 1027, and serine 1035. Residues 1202–1215 (ELDKTDEKRTRLQQ) show a composition bias toward basic and acidic residues. Phosphotyrosine is present on tyrosine 1239. Residues 1245 to 1288 (DTAATSTTPPGSPPPPPPLPEPPVLKILSSLKPGSTSTVTAPTT) are disordered. Threonine 1252 is subject to Phosphothreonine. Over residues 1254-1267 (PGSPPPPPPLPEPP) the composition is skewed to pro residues. Position 1256 is a phosphoserine (serine 1256). A compositionally biased stretch (low complexity) spans 1279-1288 (STSTVTAPTT). Serine 1307 is subject to Phosphoserine. Disordered stretches follow at residues 1320-1347 (KKSF…KGED), 1362-1421 (FGQF…VAYD), 1509-1609 (SDAL…EAKE), and 1630-2256 (QKCE…AAQA). The segment covering 1371 to 1387 (LEEEEEDDRPYDPEEEY) has biased composition (acidic residues). Serine 1514 bears the Phosphoserine mark. Over residues 1526-1546 (LFSQEQQAPDPSQGAPNTNHN) the composition is skewed to polar residues. Residues 1547–1557 (LDSRQSRDPRQ) are compositionally biased toward basic and acidic residues. A compositionally biased stretch (low complexity) spans 1649–1666 (PTAGDGAARPAPPRRVLL). Residues 1667–1679 (PTPPSTTFPPSFP) are compositionally biased toward pro residues. The span at 1699–1712 (TFMSQETSLGSSQY) shows a compositional bias: polar residues. The residue at position 1726 (serine 1726) is a Phosphoserine. The span at 1783–1792 (FPGPRGPVPP) shows a compositional bias: pro residues. Arginine 1848 is modified (omega-N-methylarginine). Positions 1855–1869 (FEDRKDPHGEKREFQ) are enriched in basic and acidic residues. Residues arginine 1904, arginine 1905, arginine 1988, arginine 1993, arginine 2004, arginine 2019, and arginine 2035 each carry the asymmetric dimethylarginine modification. 2 stretches are compositionally biased toward basic and acidic residues: residues 2081 to 2113 (EFRE…KPLD) and 2123 to 2246 (RQGR…EART).

Interacts specifically (via PHD-type zinc finger) with histone H3 that is trimethylated at 'Lys-4' (H3K4me3), histone phosphorylation at 'Thr-3' or 'Thr-6' disrupts this binding and promotes translocation of DIDO1 from chromatin to the mitotic spindle during mitosis. Ubiquitous. Expressed at intermediate levels.

It is found in the cytoplasm. It localises to the nucleus. The protein localises to the cytoskeleton. Its subcellular location is the spindle. Its function is as follows. Required for early embryonic stem cell development. Putative transcription factor, weakly pro-apoptotic when overexpressed. The polypeptide is Death-inducer obliterator 1 (Dido1) (Mus musculus (Mouse)).